A 330-amino-acid chain; its full sequence is Ketol-acid reductoisomerase (NADP(+)) (330 aa).

One can recognise a KARI N-terminal Rossmann domain in the interval 1 to 181 (MKVYYEQDAT…GGARSGVIET (181 aa)). Residues 24 to 27 (YGSQ), Arg47, and 82 to 85 (DQVQ) each bind NADP(+). His107 is an active-site residue. Gly133 is a binding site for NADP(+). Residues 182 to 327 (TFKEETETDL…GKLRGMMPWL (146 aa)) form the KARI C-terminal knotted domain. Positions 190, 194, 226, and 230 each coordinate Mg(2+). Position 251 (Ser251) interacts with substrate.

Belongs to the ketol-acid reductoisomerase family. It depends on Mg(2+) as a cofactor.

It carries out the reaction (2R)-2,3-dihydroxy-3-methylbutanoate + NADP(+) = (2S)-2-acetolactate + NADPH + H(+). It catalyses the reaction (2R,3R)-2,3-dihydroxy-3-methylpentanoate + NADP(+) = (S)-2-ethyl-2-hydroxy-3-oxobutanoate + NADPH + H(+). It functions in the pathway amino-acid biosynthesis; L-isoleucine biosynthesis; L-isoleucine from 2-oxobutanoate: step 2/4. Its pathway is amino-acid biosynthesis; L-valine biosynthesis; L-valine from pyruvate: step 2/4. Its function is as follows. Involved in the biosynthesis of branched-chain amino acids (BCAA). Catalyzes an alkyl-migration followed by a ketol-acid reduction of (S)-2-acetolactate (S2AL) to yield (R)-2,3-dihydroxy-isovalerate. In the isomerase reaction, S2AL is rearranged via a Mg-dependent methyl migration to produce 3-hydroxy-3-methyl-2-ketobutyrate (HMKB). In the reductase reaction, this 2-ketoacid undergoes a metal-dependent reduction by NADPH to yield (R)-2,3-dihydroxy-isovalerate. The protein is Ketol-acid reductoisomerase (NADP(+)) of Nitratidesulfovibrio vulgaris (strain DSM 19637 / Miyazaki F) (Desulfovibrio vulgaris).